The following is a 313-amino-acid chain: MEEMSGESVVSSAVPAAATRTTSFKGTSPSSKYVKLNVGGALYYTTMQTLTKQDTMLKAMFSGRMEVLTDSEGWILIDRCGKHFGTILNYLRDGAVPLPESRREIEELLAEAKYYLVQGLVEECQAALQNKDTYEPFCKVPVITSSKEEQKLIATSNKPAVKLLYNRSNNKYSYTSNSDDNMLKNIELFDKLSLRFNGRVLFIKDVIGDEICCWSFYGQGRKIAEVCCTSIVYATEKKQTKVEFPEARIYEETLNILLYEAQDGRGPDNALLEATGGAAGRSHHLDEDEERERIERVRRIHIKRPDDRAHLHQ.

Methionine 1 is subject to N-acetylmethionine. Residue serine 23 is modified to Phosphoserine. In terms of domain architecture, BTB spans lysine 32–glutamate 100. A PCNA-binding motif is present at residues glutamine 239–proline 245.

Belongs to the BACURD family. Homotetramer; forms a two-fold symmetric tetramer in solution. Interacts with CUL3; interaction is direct and forms a 5:5 heterodecamer. Component of the BCR(BACURD3) E3 ubiquitin ligase complex, at least composed of CUL3, KCTD10/BACURD3 and RBX1. Interacts with DNA polymerase delta subunit 2/POLD2. Interacts with PCNA.

The protein resides in the nucleus. It functions in the pathway protein modification; protein ubiquitination. Functionally, substrate-specific adapter of a BCR (BTB-CUL3-RBX1) E3 ubiquitin-protein ligase complex. The BCR(BACURD3) E3 ubiquitin ligase complex mediates the ubiquitination of target proteins, leading to their degradation by the proteasome. The chain is BTB/POZ domain-containing adapter for CUL3-mediated RhoA degradation protein 3 (KCTD10) from Homo sapiens (Human).